The chain runs to 273 residues: Photosystem I chlorophyll a/b-binding protein 3-1, chloroplastic (273 aa).

The N-terminal 39 residues, 1–39, are a transit peptide targeting the chloroplast; the sequence is MAAQALVSSSLTSSVQTARQIFGSKPVASASQKKSSFVV. Trp56 provides a ligand contact to chlorophyll b. Chlorophyll a-binding residues include Phe76, Ser82, and Glu100. Residue Arg105 participates in chlorophyll b binding. Residues 106–126 form a helical membrane-spanning segment; the sequence is FAMLGAAGAIAPEILGKAGLI. Position 140 (Ile140) interacts with chlorophyll b. A helical membrane pass occupies residues 146–166; it reads YTYWADNYTLFVLEMALMGFA. The chlorophyll b site is built by Glu167 and Arg170. Ser195 is modified (phosphoserine). Chlorophyll a contacts are provided by Lys224, Glu225, Asn228, Arg230, Gln242, and His257. The helical transmembrane segment at 231-251 threads the bilayer; sequence LAMLAILGYFIQGLVTGVGPY. Phe272 provides a ligand contact to chlorophyll b.

The protein belongs to the light-harvesting chlorophyll a/b-binding (LHC) protein family. As to quaternary structure, the LHC complex consists of chlorophyll a-b binding proteins. Red-emitting heterodimer with LHCA2. Interacts with LHCA5. Binds to carotenoids. Binds at least 14 chlorophylls (8 Chl-a and 6 Chl-b) and carotenoids such as lutein and neoxanthin. is required as a cofactor. In terms of processing, photoregulated by reversible phosphorylation of its threonine residues.

It is found in the plastid. Its subcellular location is the chloroplast thylakoid membrane. Its function is as follows. The light-harvesting complex (LHC) functions as a light receptor, it captures and delivers excitation energy to photosystems with which it is closely associated, here photosystem I. The chain is Photosystem I chlorophyll a/b-binding protein 3-1, chloroplastic from Arabidopsis thaliana (Mouse-ear cress).